The following is a 346-amino-acid chain: tRNA N6-adenosine threonylcarbamoyltransferase (346 aa).

H120, H124, and Y141 together coordinate a divalent metal cation. Substrate is bound by residues 141–145 (YVSGG), D173, G188, E192, and N277. Residue D305 coordinates a divalent metal cation.

It belongs to the KAE1 / TsaD family. In terms of assembly, component of the EKC/KEOPS complex composed of at least BUD32, CGI121, GON7, KAE1 and PCC1; the whole complex dimerizes. A divalent metal cation is required as a cofactor.

It localises to the cytoplasm. The protein resides in the nucleus. It catalyses the reaction L-threonylcarbamoyladenylate + adenosine(37) in tRNA = N(6)-L-threonylcarbamoyladenosine(37) in tRNA + AMP + H(+). Its function is as follows. Component of the EKC/KEOPS complex that is required for the formation of a threonylcarbamoyl group on adenosine at position 37 (t(6)A37) in tRNAs that read codons beginning with adenine. The complex is probably involved in the transfer of the threonylcarbamoyl moiety of threonylcarbamoyl-AMP (TC-AMP) to the N6 group of A37. KAE1 likely plays a direct catalytic role in this reaction, but requires other protein(s) of the complex to fulfill this activity. The EKC/KEOPS complex also promotes both telomere uncapping and telomere elongation. The complex is required for efficient recruitment of transcriptional coactivators. The chain is tRNA N6-adenosine threonylcarbamoyltransferase from Gibberella zeae (strain ATCC MYA-4620 / CBS 123657 / FGSC 9075 / NRRL 31084 / PH-1) (Wheat head blight fungus).